The following is a 520-amino-acid chain: GMP synthase [glutamine-hydrolyzing] (520 aa).

Residues 9 to 202 (SVLIVDFGSQ…IHNIAGIKGD (194 aa)) form the Glutamine amidotransferase type-1 domain. The active-site Nucleophile is C86. Catalysis depends on residues H176 and E178. The region spanning 203 to 395 (WSMSAYRQKA…LGLPDSFIGR (193 aa)) is the GMPS ATP-PPase domain. 230–236 (SGGVDSS) provides a ligand contact to ATP.

As to quaternary structure, homodimer.

The enzyme catalyses XMP + L-glutamine + ATP + H2O = GMP + L-glutamate + AMP + diphosphate + 2 H(+). The protein operates within purine metabolism; GMP biosynthesis; GMP from XMP (L-Gln route): step 1/1. Functionally, catalyzes the synthesis of GMP from XMP. This Rhizobium etli (strain CIAT 652) protein is GMP synthase [glutamine-hydrolyzing].